The chain runs to 520 residues: AAA-ATPase At5g57480 (520 aa).

Residues 1–24 (MKEYWTSLASLLGVLAFCQSLMQS) form the signal peptide. 244-251 (GPPGTGKS) contributes to the ATP binding site. Disordered regions lie at residues 307–340 (KKNS…EEGG) and 467–520 (NVKD…TRED). The segment covering 328–340 (SGSGSGGSGEEGG) has biased composition (gly residues). The span at 497 to 512 (QNEDEDHDEEEIELED) shows a compositional bias: acidic residues.

The protein belongs to the AAA ATPase family. BCS1 subfamily. The cofactor is Mg(2+).

It carries out the reaction ATP + H2O = ADP + phosphate + H(+). In Arabidopsis thaliana (Mouse-ear cress), this protein is AAA-ATPase At5g57480.